Reading from the N-terminus, the 229-residue chain is Aquaporin Z (229 aa).

The next 2 membrane-spanning stretches (helical) occupy residues 8 to 28 (FLGT…AAGF) and 33 to 53 (IGFA…AYAI). The NPA 1 motif lies at 62 to 64 (NPA). The next 3 helical transmembrane spans lie at 88–108 (VLGA…GAGF), 129–149 (LLAA…VIMG), and 158–178 (GFAP…SIPV). Positions 184-186 (NPA) match the NPA 2 motif. The chain crosses the membrane as a helical span at residues 192-212 (ALFVGGWAVQQLWLFWLAPII).

It belongs to the MIP/aquaporin (TC 1.A.8) family. In terms of assembly, homotetramer.

Its subcellular location is the cell inner membrane. It carries out the reaction H2O(in) = H2O(out). Its function is as follows. Channel that permits osmotically driven movement of water in both directions. It is involved in the osmoregulation and in the maintenance of cell turgor during volume expansion in rapidly growing cells. It mediates rapid entry or exit of water in response to abrupt changes in osmolarity. This chain is Aquaporin Z, found in Chromobacterium violaceum (strain ATCC 12472 / DSM 30191 / JCM 1249 / CCUG 213 / NBRC 12614 / NCIMB 9131 / NCTC 9757 / MK).